Consider the following 194-residue polypeptide: Probable RNA polymerase sigma factor HI_1459 (194 aa).

A Polymerase core binding motif is present at residues 45 to 58 (DLVQEAFLSAFKNL). A DNA-binding region (H-T-H motif) is located at residues 161 to 180 (SEEICQETHLTSSNLHTTLY).

The protein belongs to the sigma-70 factor family. ECF subfamily.

The sequence is that of Probable RNA polymerase sigma factor HI_1459 from Haemophilus influenzae (strain ATCC 51907 / DSM 11121 / KW20 / Rd).